Consider the following 84-residue polypeptide: Coiled-coil-helix-coiled-coil-helix domain-containing protein 7 (84 aa).

Positions S12–M54 constitute a CHCH domain. 2 consecutive short sequence motifs (cx9C motif) follow at residues C15–C25 and C36–C46. Intrachain disulfides connect C15–C46 and C25–C36.

Belongs to the CHCHD7 family.

It is found in the mitochondrion intermembrane space. This Xenopus laevis (African clawed frog) protein is Coiled-coil-helix-coiled-coil-helix domain-containing protein 7 (chchd7).